The following is a 1017-amino-acid chain: Voltage-gated delayed rectifier potassium channel KCNH4 (1017 aa).

Over 1–228 (MPVMKGLLAP…LLHYSVSKAI (228 aa)) the chain is Cytoplasmic. Residues 14-90 (FLDTIATRFD…QRLHKALEGH (77 aa)) form the PAS domain. The 53-residue stretch at 93–145 (HRAEICFYRKDGSAFWCLLDMMPIKNEMGEVVLFLFSFKDITQSGSPGLGPQG) folds into the PAC domain. The segment at 138 to 157 (SPGLGPQGGRGDSNHENSLG) is disordered. Residues 139–148 (PGLGPQGGRG) are compositionally biased toward gly residues. A helical transmembrane segment spans residues 229-249 (WDGLILLATFYVAVTVPYNVC). At 250-259 (FSGDDDTPIT) the chain is on the extracellular side. A helical membrane pass occupies residues 260 to 280 (SRHTLVSDIAVEMLFILDIIL). The Cytoplasmic segment spans residues 281-302 (NFRTTYVSQSGQVISAPRSIGL). Residues 303–323 (HYLATWFFIDLIAALPFDLLY) form a helical membrane-spanning segment. Residues 324-332 (IFNITVTSL) are Extracellular-facing. N-linked (GlcNAc...) asparagine glycosylation occurs at Asn-326. The helical; Voltage-sensor transmembrane segment at 333-353 (VHLLKTVRLLRLLRLLQKLER) threads the bilayer. Residues 354–361 (YSQCSAVV) lie on the Cytoplasmic side of the membrane. A helical membrane pass occupies residues 362–382 (LTLLMSVFALLAHWMACIWYV). Residues 383–427 (IGRREMEANDPLLWDIGWLHELGKRLEVPYVNGSVGGPSRRSAYI) are Extracellular-facing. Asn-414 is a glycosylation site (N-linked (GlcNAc...) asparagine). Positions 428 to 448 (AALYFTLSSLTSVGFGNVCAN) form an intramembrane region, pore-forming. The Selectivity filter motif lies at 439–444 (SVGFGN). At 449-482 (TDAEKIFSICTMLIGALMHAVVFGNVTAIIQRMY) the chain is on the extracellular side. Asn-473 is a glycosylation site (N-linked (GlcNAc...) asparagine). The helical transmembrane segment at 483-503 (SRRSLYHSRMKDLKDFIRVHR) threads the bilayer. Over 504–1017 (LPRPLKQRML…SFQSRSDTFH (514 aa)) the chain is Cytoplasmic. The cNMP-binding domain stretch occupies residues 556-620 (LFGAASRGCL…AILGKGDLIG (65 aa)). Residues 691-724 (GSDTSGLSRFSRSPRLSQPRSESLGSSSDKTLPS) show a composition bias toward polar residues. Disordered stretches follow at residues 691 to 749 (GSDT…LPNL), 772 to 803 (LVSS…RCSA), 821 to 875 (PDLS…EAEE), and 971 to 1017 (LLDL…DTFH). Residues 772–787 (LVSSPSLSPSLSPALA) are compositionally biased toward low complexity. Residues 978–1002 (ILPPYPSEPDPLGPSPVPEASPPTP) show a composition bias toward pro residues. Polar residues predominate over residues 1008-1017 (SFQSRSDTFH).

It belongs to the potassium channel family. H (Eag) (TC 1.A.1.20) subfamily. Kv12.3/KCNH4 sub-subfamily. In terms of assembly, the potassium channel is probably composed of a homo- or heterotetrameric complex of pore-forming alpha subunits that can associate with modulating beta subunits. As to expression, detected only in brain, in particular in the telencephalon. Detected in putamen and caudate nucleus, and at lower levels in cerebral cortex, occipital and hippocampus.

The protein resides in the membrane. The catalysed reaction is K(+)(in) = K(+)(out). Its function is as follows. Pore-forming (alpha) subunit of a voltage-gated delayed rectifier. Activates at more negative voltages, exhibits fast prepulse-independent activation kinetics and deactivates much more slowly, but shows no inactivation. In Homo sapiens (Human), this protein is Voltage-gated delayed rectifier potassium channel KCNH4.